The primary structure comprises 1003 residues: Phosphatidylinositol 4,5-bisphosphate 5-phosphatase A (1003 aa).

2 disordered regions span residues 1-110 (MEGQ…AAKS) and 147-414 (AMPR…QPTC). The RSXSXX motif 1 motif lies at 6–11 (RSGSAR). Residues 11 to 24 (RPGTRTGLGPLPGT) show a composition bias toward low complexity. Arg56 carries the post-translational modification Asymmetric dimethylarginine; alternate. Residue Arg56 is modified to Omega-N-methylarginine; alternate. An Omega-N-methylarginine modification is found at Arg65. Arg76 is subject to Asymmetric dimethylarginine. Arg83 is subject to Asymmetric dimethylarginine; alternate. Residue Arg83 is modified to Omega-N-methylarginine; alternate. Residues 160-174 (LTPTSRDQKQLSPTS) are compositionally biased toward polar residues. Ser171 is modified (phosphoserine). Residues 180–196 (ALATSGLSLALASQEQP) show a composition bias toward low complexity. Positions 197–210 (PQSPSSPSPVPSPV) are enriched in pro residues. The segment covering 284-294 (ARPEAPRHSPE) has biased composition (basic and acidic residues). Ser292 and Ser325 each carry phosphoserine. Over residues 338 to 348 (VPPPLPKPPRS) the composition is skewed to pro residues. Residues 346-351 (PRSPSR) carry the SH3-binding motif. Low complexity-rich tracts occupy residues 349–361 (PSRSPSRSPNRSP) and 390–413 (QAQESPAAATTTTSPTSSWSAQPT). The RSXSXX motif 2 motif lies at 351–356 (RSPSRS). Positions 422–725 (ITVVTWNVGT…SDHKPVAAQF (304 aa)) are catalytic. The segment at 726–837 (ILQFAFRDDV…IGVTEPFQIS (112 aa)) is required for ruffle localization. The disordered stretch occupies residues 839–1003 (PTSESASSST…LGLEEGGLGP (165 aa)). The span at 840–855 (TSESASSSTDSSGTSS) shows a compositional bias: low complexity. 2 short sequence motifs (RSXSXX motif) span residues 871–876 (RSPSPG) and 882–887 (RSRSPG). Ser900 is modified (phosphoserine). Composition is skewed to low complexity over residues 907–919 (SRSPSPQSRQLPR) and 927–943 (SSSSRGSSEEGPSGLPG). Residues 908–913 (RSPSPQ) carry the RSXSXX motif 5 motif. Ser987 is subject to Phosphoserine.

This sequence belongs to the inositol 1,4,5-trisphosphate 5-phosphatase type II family.

The protein localises to the cytoplasm. It carries out the reaction 1D-myo-inositol 1,4,5-trisphosphate + H2O = 1D-myo-inositol 1,4-bisphosphate + phosphate. The enzyme catalyses 1D-myo-inositol 1,3,4,5-tetrakisphosphate + H2O = 1D-myo-inositol 1,3,4-trisphosphate + phosphate. The catalysed reaction is a 1,2-diacyl-sn-glycero-3-phospho-(1D-myo-inositol-4,5-bisphosphate) + H2O = a 1,2-diacyl-sn-glycero-3-phospho-(1D-myo-inositol 4-phosphate) + phosphate. Functionally, inositol 5-phosphatase, which converts inositol 1,4,5-trisphosphate to inositol 1,4-bisphosphate. Also converts phosphatidylinositol 4,5-bisphosphate to phosphatidylinositol 4-phosphate and inositol 1,3,4,5-tetrakisphosphate to inositol 1,3,4-trisphosphate in vitro. May be involved in modulation of the function of inositol and phosphatidylinositol polyphosphate-binding proteins that are present at membranes ruffles. The sequence is that of Phosphatidylinositol 4,5-bisphosphate 5-phosphatase A (Inpp5j) from Mus musculus (Mouse).